A 71-amino-acid polypeptide reads, in one-letter code: Putative membrane protein insertion efficiency factor (71 aa).

It belongs to the UPF0161 family.

The protein localises to the cell membrane. Could be involved in insertion of integral membrane proteins into the membrane. The chain is Putative membrane protein insertion efficiency factor from Clostridium acetobutylicum (strain ATCC 824 / DSM 792 / JCM 1419 / IAM 19013 / LMG 5710 / NBRC 13948 / NRRL B-527 / VKM B-1787 / 2291 / W).